The chain runs to 108 residues: Cytochrome c (108 aa).

Heme c is bound by residues cysteine 19, cysteine 22, histidine 23, and methionine 85.

It belongs to the cytochrome c family. Binds 1 heme c group covalently per subunit.

Its subcellular location is the mitochondrion intermembrane space. In terms of biological role, electron carrier protein. The oxidized form of the cytochrome c heme group can accept an electron from the heme group of the cytochrome c1 subunit of cytochrome reductase. Cytochrome c then transfers this electron to the cytochrome oxidase complex, the final protein carrier in the mitochondrial electron-transport chain. This chain is Cytochrome c, found in Stellaria longipes (Longstalk starwort).